A 160-amino-acid polypeptide reads, in one-letter code: MTLNLNPLETNLVNLVIVIGLLFWFLRGFLGGILERRRAAILQELQDAESRLKTATENLSQAQSELAAAQQKAEKIRADGQARAAGIRAEGEKRTISVMAAIKAGADADAEADAARIKDSLRREAALAAIDKALAVLPARLDASAQAKLIDSTIKNLENA.

A helical membrane pass occupies residues 15-35; that stretch reads LVIVIGLLFWFLRGFLGGILE.

It belongs to the ATPase B chain family. In terms of assembly, F-type ATPases have 2 components, F(1) - the catalytic core - and F(0) - the membrane proton channel. F(1) has five subunits: alpha(3), beta(3), gamma(1), delta(1), epsilon(1). F(0) has four main subunits: a(1), b(1), b'(1) and c(10-14). The alpha and beta chains form an alternating ring which encloses part of the gamma chain. F(1) is attached to F(0) by a central stalk formed by the gamma and epsilon chains, while a peripheral stalk is formed by the delta, b and b' chains.

Its subcellular location is the cellular thylakoid membrane. Its function is as follows. F(1)F(0) ATP synthase produces ATP from ADP in the presence of a proton or sodium gradient. F-type ATPases consist of two structural domains, F(1) containing the extramembraneous catalytic core and F(0) containing the membrane proton channel, linked together by a central stalk and a peripheral stalk. During catalysis, ATP synthesis in the catalytic domain of F(1) is coupled via a rotary mechanism of the central stalk subunits to proton translocation. In terms of biological role, component of the F(0) channel, it forms part of the peripheral stalk, linking F(1) to F(0). The sequence is that of ATP synthase subunit b from Synechococcus sp. (strain CC9605).